We begin with the raw amino-acid sequence, 87 residues long: Prolactin-releasing peptide (87 aa).

A signal peptide spans 1-22; sequence MKVLRAWLLCLLMLGLALRGAA. Phe53 is subject to Phenylalanine amide. Residues 58 to 87 constitute a propeptide that is removed on maturation; the sequence is ATLGDVPKPGLRPRLTCFPLEGGAMSSQDG.

As to expression, medulla oblongata and hypothalamus.

The protein localises to the secreted. Its function is as follows. Stimulates prolactin (PRL) release and regulates the expression of prolactin through its receptor GPR10. May stimulate lactotrophs directly to secrete PRL. The sequence is that of Prolactin-releasing peptide (PRLH) from Homo sapiens (Human).